The sequence spans 473 residues: Putative malate dehydrogenase 1B (473 aa).

It belongs to the LDH/MDH superfamily. MDH type 2 family.

This chain is Putative malate dehydrogenase 1B (MDH1B), found in Bos taurus (Bovine).